Consider the following 432-residue polypeptide: Glutamyl-tRNA reductase (432 aa).

Substrate-binding positions include 55–58 (TCNR), Ser113, 118–120 (EAQ), and Gln124. The Nucleophile role is filled by Cys56. 193–198 (GAGEMI) contacts NADP(+).

The protein belongs to the glutamyl-tRNA reductase family. As to quaternary structure, homodimer.

The catalysed reaction is (S)-4-amino-5-oxopentanoate + tRNA(Glu) + NADP(+) = L-glutamyl-tRNA(Glu) + NADPH + H(+). The protein operates within porphyrin-containing compound metabolism; protoporphyrin-IX biosynthesis; 5-aminolevulinate from L-glutamyl-tRNA(Glu): step 1/2. Functionally, catalyzes the NADPH-dependent reduction of glutamyl-tRNA(Glu) to glutamate 1-semialdehyde (GSA). The chain is Glutamyl-tRNA reductase from Paracidovorax citrulli (strain AAC00-1) (Acidovorax citrulli).